Consider the following 285-residue polypeptide: HTH-type transcriptional regulator YofA (285 aa).

Residues 1–58 (MESGDLKIFQAVAREGSITKAAQMLNYVQSNVTARVHNLEEDLNIRLFHRTNRGMKLT) form the HTH lysR-type domain. Positions 18–37 (ITKAAQMLNYVQSNVTARVH) form a DNA-binding region, H-T-H motif.

The protein belongs to the LysR transcriptional regulatory family.

It is found in the cytoplasm. Functionally, regulates expression of the cell division protein ftsW, and is essential for cell viability during stationary phase. This Bacillus subtilis (strain 168) protein is HTH-type transcriptional regulator YofA (yofA).